We begin with the raw amino-acid sequence, 1155 residues long: Protein BREAST CANCER SUSCEPTIBILITY 2 homolog B (1155 aa).

4 BRCA2 repeats span residues 63–97 (MPGEIPMFRTGLGKSVVLKESSIAKAKSILAENVA), 116–150 (TAETMPMFRTALGKTVPLKESSIAKPLSILGSDMI), 163–197 (FGVPNSLFQTASNKKVNVSSAGLARAKALLGLEED), and 257–291 (LKVPPTKFQTAGGKSLSVSAEALKRARNLLGDPEL).

As to quaternary structure, interacts with RAD51 and DMC1. Interacts with DSS1(I) and DSS1(V). Can interact with both RAD51 and DSS1(I) or both DMC1 and DSS1(I) in a tripartite complex. As to expression, expressed in flower buds.

Its function is as follows. Involved in double-strand break repair and/or homologous recombination by mediating RAD51- and DMC1-facilitated DNA repair. Plays an essential role in both somatic and meiotic homologous recombination. Is crucial for the formation of RAD51 and DMC1 foci during male meiotic homologous recombination in prophase I. In Arabidopsis thaliana (Mouse-ear cress), this protein is Protein BREAST CANCER SUSCEPTIBILITY 2 homolog B.